Here is a 130-residue protein sequence, read N- to C-terminus: Glycine cleavage system H protein (130 aa).

One can recognise a Lipoyl-binding domain in the interval 25–107 (IATIGITEFA…YGEGWFLKVR (83 aa)). Lys66 is subject to N6-lipoyllysine.

It belongs to the GcvH family. As to quaternary structure, the glycine cleavage system is composed of four proteins: P, T, L and H. The cofactor is (R)-lipoate.

In terms of biological role, the glycine cleavage system catalyzes the degradation of glycine. The H protein shuttles the methylamine group of glycine from the P protein to the T protein. The sequence is that of Glycine cleavage system H protein from Nostoc sp. (strain PCC 7120 / SAG 25.82 / UTEX 2576).